The chain runs to 356 residues: Histidinol-phosphate aminotransferase (356 aa).

An N6-(pyridoxal phosphate)lysine modification is found at lysine 214.

It belongs to the class-II pyridoxal-phosphate-dependent aminotransferase family. Histidinol-phosphate aminotransferase subfamily. As to quaternary structure, homodimer. Pyridoxal 5'-phosphate serves as cofactor.

It catalyses the reaction L-histidinol phosphate + 2-oxoglutarate = 3-(imidazol-4-yl)-2-oxopropyl phosphate + L-glutamate. Its pathway is amino-acid biosynthesis; L-histidine biosynthesis; L-histidine from 5-phospho-alpha-D-ribose 1-diphosphate: step 7/9. The polypeptide is Histidinol-phosphate aminotransferase (Shigella flexneri serotype 5b (strain 8401)).